Here is a 66-residue protein sequence, read N- to C-terminus: MPKQKTHRASAKRFKRTGSGGLKRFRAFTSHRFHGKTKKQRRHLRKASMVHSGDFKRIKSMVSQMR.

Residues Met-1–Arg-16 show a composition bias toward basic residues. The tract at residues Met-1–Gly-20 is disordered.

This sequence belongs to the bacterial ribosomal protein bL35 family.

In Streptococcus thermophilus (strain ATCC BAA-250 / LMG 18311), this protein is Large ribosomal subunit protein bL35.